The primary structure comprises 530 residues: Ubiquitin carboxyl-terminal hydrolase 17-like protein 20 (530 aa).

One can recognise a USP domain in the interval 80 to 375 (AGLQNMGNTC…QAYVLFYIQK (296 aa)). The active-site Nucleophile is the cysteine 89. The active-site Proton acceptor is the histidine 334. Basic and acidic residues-rich tracts occupy residues 382–392 (SESVSRGREPR) and 398–413 (DTDR…RDHP). 2 disordered regions span residues 382-413 (SESV…RDHP) and 509-530 (RGRA…LVCQ). A compositionally biased stretch (basic residues) spans 510-524 (GRARRSKGKNKHSKR).

It belongs to the peptidase C19 family. USP17 subfamily.

The protein resides in the nucleus. The protein localises to the endoplasmic reticulum. It carries out the reaction Thiol-dependent hydrolysis of ester, thioester, amide, peptide and isopeptide bonds formed by the C-terminal Gly of ubiquitin (a 76-residue protein attached to proteins as an intracellular targeting signal).. Deubiquitinating enzyme that removes conjugated ubiquitin from specific proteins to regulate different cellular processes that may include cell proliferation, progression through the cell cycle, apoptosis, cell migration, and the cellular response to viral infection. This Homo sapiens (Human) protein is Ubiquitin carboxyl-terminal hydrolase 17-like protein 20 (USP17L20).